We begin with the raw amino-acid sequence, 241 residues long: Trypsin-10 (241 aa).

The signal sequence occupies residues 1–13 (MKSLIFVLLLGAV). A propeptide spans 14 to 19 (FAEEDK) (activation peptide). The region spanning 20 to 239 (IVGGYECTRH…LSGWVRDTMA (220 aa)) is the Peptidase S1 domain. 6 disulfides stabilise this stretch: Cys-26–Cys-155, Cys-44–Cys-60, Cys-128–Cys-228, Cys-135–Cys-201, Cys-166–Cys-180, and Cys-191–Cys-215. Active-site charge relay system residues include His-59 and Asp-103. Ser-195 (charge relay system) is an active-site residue.

Belongs to the peptidase S1 family.

Its subcellular location is the secreted. The protein localises to the extracellular space. It catalyses the reaction Preferential cleavage: Arg-|-Xaa, Lys-|-Xaa.. In Gadus morhua (Atlantic cod), this protein is Trypsin-10.